The chain runs to 392 residues: Erythronate-4-phosphate dehydrogenase (392 aa).

2 residues coordinate substrate: Ser48 and Thr69. Asp149 lines the NAD(+) pocket. Arg215 is a catalytic residue. Asp239 is an NAD(+) binding site. The active site involves Glu244. Residue His261 is the Proton donor of the active site. Gly264 is a binding site for NAD(+). Position 265 (Tyr265) interacts with substrate.

Belongs to the D-isomer specific 2-hydroxyacid dehydrogenase family. PdxB subfamily. In terms of assembly, homodimer.

The protein resides in the cytoplasm. It catalyses the reaction 4-phospho-D-erythronate + NAD(+) = (R)-3-hydroxy-2-oxo-4-phosphooxybutanoate + NADH + H(+). The protein operates within cofactor biosynthesis; pyridoxine 5'-phosphate biosynthesis; pyridoxine 5'-phosphate from D-erythrose 4-phosphate: step 2/5. Catalyzes the oxidation of erythronate-4-phosphate to 3-hydroxy-2-oxo-4-phosphonooxybutanoate. In Salinibacter ruber (strain DSM 13855 / M31), this protein is Erythronate-4-phosphate dehydrogenase.